A 149-amino-acid polypeptide reads, in one-letter code: Transcriptional repressor NrdR (149 aa).

Residues 3–34 fold into a zinc finger; that stretch reads CPFCSAVDTKVIDSRLVGEGSQVRRRRQCLVC. The region spanning 49 to 139 is the ATP-cone domain; it reads PRVIKSNEVR…VYRSFEDIRE (91 aa).

Belongs to the NrdR family. It depends on Zn(2+) as a cofactor.

Negatively regulates transcription of bacterial ribonucleotide reductase nrd genes and operons by binding to NrdR-boxes. The protein is Transcriptional repressor NrdR of Pectobacterium carotovorum subsp. carotovorum (strain PC1).